We begin with the raw amino-acid sequence, 176 residues long: Endothelin-2 (176 aa).

An N-terminal signal peptide occupies residues 1-22; that stretch reads MVSPAWCSIALALLLALHEGKG. The propeptide occupies 23–44; that stretch reads QAAATMEQPASAPKGRGPHLRF. Cystine bridges form between Cys-47–Cys-61 and Cys-49–Cys-57. Positions 68–176 are excised as a propeptide; sequence VNTAGQTAPY…IPAHSRRRKR (109 aa). Residues 94–109 form an endothelin-like region; the sequence is CECSSAGDSACATFCH.

The protein belongs to the endothelin/sarafotoxin family.

The protein resides in the secreted. Functionally, vasoconstrictor. The chain is Endothelin-2 (Edn2) from Rattus norvegicus (Rat).